Here is a 110-residue protein sequence, read N- to C-terminus: Insulin (110 aa).

The first 24 residues, 1-24 (MALWMRLLPLLALLALWAPAPTRA), serve as a signal peptide directing secretion. 3 disulfides stabilise this stretch: Cys31–Cys96, Cys43–Cys109, and Cys95–Cys100. Residues 57–87 (EVEDLQVRDVELAGAPGEGGLQPLALEGALQ) constitute a propeptide, c peptide.

Belongs to the insulin family. Heterodimer of a B chain and an A chain linked by two disulfide bonds.

Its subcellular location is the secreted. In terms of biological role, insulin decreases blood glucose concentration. It increases cell permeability to monosaccharides, amino acids and fatty acids. It accelerates glycolysis, the pentose phosphate cycle, and glycogen synthesis in liver. In Canis lupus familiaris (Dog), this protein is Insulin (INS).